A 429-amino-acid polypeptide reads, in one-letter code: Bifunctional protein GlmU (429 aa).

A pyrophosphorylase region spans residues 1–223; it reads MKTSILILAA…EDEFMGINDK (223 aa). Residues 8–11, lysine 22, and 81–82 each bind UDP-N-acetyl-alpha-D-glucosamine; these read LAAG and GT. Aspartate 102 contributes to the Mg(2+) binding site. UDP-N-acetyl-alpha-D-glucosamine-binding residues include glycine 135, glutamate 149, asparagine 164, and asparagine 221. Residue asparagine 221 participates in Mg(2+) binding. Residues 224-244 form a linker region; sequence FELSIAENFMQEKIKKYWMQQ. Positions 245–429 are N-acetyltransferase; it reads GVIFHLPQST…KDYYYKKFQK (185 aa). 2 residues coordinate UDP-N-acetyl-alpha-D-glucosamine: arginine 308 and lysine 325. The active-site Proton acceptor is histidine 336. The UDP-N-acetyl-alpha-D-glucosamine site is built by tyrosine 339 and asparagine 350. Residues 359–360, serine 378, alanine 396, and arginine 413 each bind acetyl-CoA; that span reads NY.

The protein in the N-terminal section; belongs to the N-acetylglucosamine-1-phosphate uridyltransferase family. In the C-terminal section; belongs to the transferase hexapeptide repeat family. Homotrimer. Requires Mg(2+) as cofactor.

It is found in the cytoplasm. It carries out the reaction alpha-D-glucosamine 1-phosphate + acetyl-CoA = N-acetyl-alpha-D-glucosamine 1-phosphate + CoA + H(+). It catalyses the reaction N-acetyl-alpha-D-glucosamine 1-phosphate + UTP + H(+) = UDP-N-acetyl-alpha-D-glucosamine + diphosphate. The protein operates within nucleotide-sugar biosynthesis; UDP-N-acetyl-alpha-D-glucosamine biosynthesis; N-acetyl-alpha-D-glucosamine 1-phosphate from alpha-D-glucosamine 6-phosphate (route II): step 2/2. Its pathway is nucleotide-sugar biosynthesis; UDP-N-acetyl-alpha-D-glucosamine biosynthesis; UDP-N-acetyl-alpha-D-glucosamine from N-acetyl-alpha-D-glucosamine 1-phosphate: step 1/1. It functions in the pathway bacterial outer membrane biogenesis; LPS lipid A biosynthesis. Functionally, catalyzes the last two sequential reactions in the de novo biosynthetic pathway for UDP-N-acetylglucosamine (UDP-GlcNAc). The C-terminal domain catalyzes the transfer of acetyl group from acetyl coenzyme A to glucosamine-1-phosphate (GlcN-1-P) to produce N-acetylglucosamine-1-phosphate (GlcNAc-1-P), which is converted into UDP-GlcNAc by the transfer of uridine 5-monophosphate (from uridine 5-triphosphate), a reaction catalyzed by the N-terminal domain. This Campylobacter jejuni (strain RM1221) protein is Bifunctional protein GlmU.